A 142-amino-acid polypeptide reads, in one-letter code: Translation initiation factor 2 subunit beta (142 aa).

It belongs to the eIF-2-beta/eIF-5 family. In terms of assembly, heterotrimer composed of an alpha, a beta and a gamma chain.

EIF-2 functions in the early steps of protein synthesis by forming a ternary complex with GTP and initiator tRNA. This chain is Translation initiation factor 2 subunit beta, found in Methanosphaera stadtmanae (strain ATCC 43021 / DSM 3091 / JCM 11832 / MCB-3).